We begin with the raw amino-acid sequence, 157 residues long: 3-hydroxyacyl-[acyl-carrier-protein] dehydratase FabZ (157 aa).

H58 is a catalytic residue.

It belongs to the thioester dehydratase family. FabZ subfamily.

It is found in the cytoplasm. The enzyme catalyses a (3R)-hydroxyacyl-[ACP] = a (2E)-enoyl-[ACP] + H2O. Involved in unsaturated fatty acids biosynthesis. Catalyzes the dehydration of short chain beta-hydroxyacyl-ACPs and long chain saturated and unsaturated beta-hydroxyacyl-ACPs. In Rhizorhabdus wittichii (strain DSM 6014 / CCUG 31198 / JCM 15750 / NBRC 105917 / EY 4224 / RW1) (Sphingomonas wittichii), this protein is 3-hydroxyacyl-[acyl-carrier-protein] dehydratase FabZ.